We begin with the raw amino-acid sequence, 436 residues long: Putative actin-fragmin kinase DDB_G0268748 (436 aa).

The interval 14-58 is disordered; sequence DKNIDSGSSSSNIGGSSSNSSGTTNKRSSGNFNGSSASSSPSSST. The span at 18–57 shows a compositional bias: low complexity; that stretch reads DSGSSSSNIGGSSSNSSGTTNKRSSGNFNGSSASSSPSSS.

Belongs to the protein kinase superfamily. AFK Ser/Thr protein kinase family.

This Dictyostelium discoideum (Social amoeba) protein is Putative actin-fragmin kinase DDB_G0268748.